Consider the following 272-residue polypeptide: Replication-associated protein A (272 aa).

Residues 11–114 (SHRNVNTFLT…PLAVFERGTF (104 aa)) form the CRESS-DNA virus Rep endonuclease domain. Positions 18–21 (FLTY) match the RCR-1 motif. A divalent metal cation contacts are provided by glutamate 52, histidine 60, and histidine 62. The RCR-2 motif lies at 60–62 (HLH). The active-site For DNA cleavage activity is tyrosine 100. Residues 100–103 (YILK) carry the RCR-3 motif. Glutamate 104 contributes to the a divalent metal cation binding site. A compositionally biased stretch (polar residues) spans 119–128 (SSFQGNPSKG). A disordered region spans residues 119 to 138 (SSFQGNPSKGNSEKKPSKDE). A compositionally biased stretch (basic and acidic residues) spans 129–138 (NSEKKPSKDE). The interval 175 to 187 (SANKLFPEIQEEF) is oligomerization. Positions 198-202 (LLCNE) match the LXCXE motif, interaction with host RBR1 motif. The tract at residues 221–230 (MLLQPTCYTL) is transactivation. The span at 245–264 (SQQMKEQESRASTSSVQQEL) shows a compositional bias: polar residues. Residues 245–272 (SQQMKEQESRASTSSVQQELGNLLGPEA) are disordered.

Belongs to the geminiviridae Rep protein family. As to quaternary structure, homooligomer. Interacts (via LXCXE domain) with host retinoblastoma-related protein 1 (RBR1), and may thereby deregulate the host cell cycle. Part of the C- and V-complexes which are RepA-Rep-DNA complexes involved in the c-sense and v-sense transcription. Mg(2+) is required as a cofactor. The cofactor is Mn(2+).

The protein resides in the host nucleus. The protein localises to the host cytoplasm. Its function is as follows. Implicated in enhancement of V-sense gene expression. Acts a an inhibitor of C-sense gene transcription. In Avena sativa (Oat), this protein is Replication-associated protein A.